A 260-amino-acid polypeptide reads, in one-letter code: Triosephosphate isomerase (260 aa).

Residue 11–13 (NWK) participates in substrate binding. Residue His-103 is the Electrophile of the active site. Catalysis depends on Glu-175, which acts as the Proton acceptor. Substrate is bound by residues Gly-181, Ser-220, and 241-242 (GG).

It belongs to the triosephosphate isomerase family. Homodimer.

The protein localises to the cytoplasm. The enzyme catalyses D-glyceraldehyde 3-phosphate = dihydroxyacetone phosphate. It participates in carbohydrate biosynthesis; gluconeogenesis. Its pathway is carbohydrate degradation; glycolysis; D-glyceraldehyde 3-phosphate from glycerone phosphate: step 1/1. Involved in the gluconeogenesis. Catalyzes stereospecifically the conversion of dihydroxyacetone phosphate (DHAP) to D-glyceraldehyde-3-phosphate (G3P). This chain is Triosephosphate isomerase, found in Shewanella sediminis (strain HAW-EB3).